Here is a 116-residue protein sequence, read N- to C-terminus: Ribosome-binding factor A (116 aa).

Belongs to the RbfA family. In terms of assembly, monomer. Binds 30S ribosomal subunits, but not 50S ribosomal subunits or 70S ribosomes.

It localises to the cytoplasm. Functionally, one of several proteins that assist in the late maturation steps of the functional core of the 30S ribosomal subunit. Associates with free 30S ribosomal subunits (but not with 30S subunits that are part of 70S ribosomes or polysomes). Required for efficient processing of 16S rRNA. May interact with the 5'-terminal helix region of 16S rRNA. In Buchnera aphidicola subsp. Cinara cedri (strain Cc), this protein is Ribosome-binding factor A.